A 768-amino-acid chain; its full sequence is Tripartite motif-containing protein 67 (768 aa).

An RING-type; degenerate zinc finger spans residues 7 to 42 (CPVCGSLFREPIILPCSHNVCLPCARTIAVQTPDGE). Low complexity predominate over residues 55–70 (AAAAATPPDQDAAAGA). Disordered regions lie at residues 55–74 (AAAAATPPDQDAAAGATSGG) and 247–284 (QPPPPPTPPEATPAVTGTSTASSAGGCRSPGGAGASAP). A B box-type 1; degenerate zinc finger spans residues 201–248 (AICQLCDRTPPEPAATLCEQCDVLYCATCQLKCHPSRGPFAKHRLVQP). The segment covering 247–257 (QPPPPPTPPEA) has biased composition (pro residues). A B box-type 2 zinc finger spans residues 285–327 (RKFPTCPEHEMENYSMYCVSCRSPVCYMCLEEGRHSKHEVKPL). Cys290, His293, Cys313, and His319 together coordinate Zn(2+). A coiled-coil region spans residues 332-369 (KQHKAQLSQALNGVSDKAKEAKEFLVQLKNILQQIQEN). Positions 435-493 (IKEDDPSGFLQISDALIKRVQTSQEQWVKGALEPKVSAEFDLTLDSEPLLQAIHQLDFV) constitute a COS domain. A Fibronectin type-III domain is found at 498–592 (PPVPLLQLEK…KTVVLQTSDV (95 aa)). The region spanning 574-765 (NSSGVGPYSK…VPTNLGRPKL (192 aa)) is the B30.2/SPRY domain.

The protein localises to the cytoplasm. Its subcellular location is the cytoskeleton. The polypeptide is Tripartite motif-containing protein 67 (Trim67) (Mus musculus (Mouse)).